Here is a 131-residue protein sequence, read N- to C-terminus: Small ribosomal subunit protein uS11 (131 aa).

The protein belongs to the universal ribosomal protein uS11 family. As to quaternary structure, part of the 30S ribosomal subunit. Interacts with proteins S7 and S18. Binds to IF-3.

Its function is as follows. Located on the platform of the 30S subunit, it bridges several disparate RNA helices of the 16S rRNA. Forms part of the Shine-Dalgarno cleft in the 70S ribosome. The sequence is that of Small ribosomal subunit protein uS11 from Pelobacter propionicus (strain DSM 2379 / NBRC 103807 / OttBd1).